A 99-amino-acid polypeptide reads, in one-letter code: Integration host factor subunit beta (99 aa).

It belongs to the bacterial histone-like protein family. As to quaternary structure, heterodimer of an alpha and a beta chain.

This protein is one of the two subunits of integration host factor, a specific DNA-binding protein that functions in genetic recombination as well as in transcriptional and translational control. This chain is Integration host factor subunit beta, found in Rhizobium etli (strain CIAT 652).